A 268-amino-acid chain; its full sequence is Helix-loop-helix protein 25 (268 aa).

Residues 1-23 (MPKVIQSSMSDYRSVPYNQTPKS) show a composition bias toward polar residues. Residues 1–29 (MPKVIQSSMSDYRSVPYNQTPKSASERKR) are disordered. The tract at residues 92–105 (ERRKVKTEREKIRR) is basic motif. One can recognise a bHLH domain in the interval 92 to 149 (ERRKVKTEREKIRRKKQDDCYAELKFFILNKQMGSYEQRLKLERITILEIIIDYIKHN). The tract at residues 106–149 (KKQDDCYAELKFFILNKQMGSYEQRLKLERITILEIIIDYIKHN) is helix-loop-helix motif.

It localises to the nucleus. Functionally, probable transcription factor. Modulates lifespan and also recovery from the developmentally arrested larval state known as dauer, perhaps acting upstream of phosphatase PTEN/daf-18. Regulates expression of genes involved in cell division, cell-cycle regulation, and sexual reproduction, including daf-18. This Caenorhabditis elegans protein is Helix-loop-helix protein 25.